The primary structure comprises 153 residues: Ribonuclease H (153 aa).

Residues 1–141 (MKLVEIFTDG…CDELAKAGAN (141 aa)) enclose the RNase H type-1 domain. Mg(2+) contacts are provided by D9, E47, D69, and D133.

This sequence belongs to the RNase H family. Monomer. Mg(2+) serves as cofactor.

It localises to the cytoplasm. It carries out the reaction Endonucleolytic cleavage to 5'-phosphomonoester.. In terms of biological role, endonuclease that specifically degrades the RNA of RNA-DNA hybrids. This chain is Ribonuclease H, found in Actinobacillus pleuropneumoniae serotype 5b (strain L20).